A 276-amino-acid polypeptide reads, in one-letter code: CDP-diacylglycerol--serine O-phosphatidyltransferase (276 aa).

Positions methionine 1–isoleucine 21 are disordered. Phosphoserine is present on residues serine 4, serine 34, serine 42, serine 46, serine 47, and serine 50. A run of 4 helical transmembrane segments spans residues methionine 82 to leucine 102, isoleucine 163 to leucine 183, tyrosine 210 to valine 230, and glutamine 248 to serine 268.

The protein belongs to the CDP-alcohol phosphatidyltransferase class-I family. It depends on Mn(2+) as a cofactor. The cofactor is Mg(2+).

The protein resides in the microsome membrane. It is found in the endoplasmic reticulum membrane. It localises to the mitochondrion outer membrane. The catalysed reaction is a CDP-1,2-diacyl-sn-glycerol + L-serine = a 1,2-diacyl-sn-glycero-3-phospho-L-serine + CMP + H(+). Its pathway is phospholipid metabolism; phosphatidylethanolamine biosynthesis; phosphatidylethanolamine from CDP-diacylglycerol: step 1/2. In terms of biological role, catalyzes the synthesis of phosphatidylserine (PtdSer). The chain is CDP-diacylglycerol--serine O-phosphatidyltransferase (CHO1) from Saccharomyces cerevisiae (strain ATCC 204508 / S288c) (Baker's yeast).